The primary structure comprises 420 residues: Gamma-glutamyl phosphate reductase (420 aa).

It belongs to the gamma-glutamyl phosphate reductase family.

It is found in the cytoplasm. It carries out the reaction L-glutamate 5-semialdehyde + phosphate + NADP(+) = L-glutamyl 5-phosphate + NADPH + H(+). It functions in the pathway amino-acid biosynthesis; L-proline biosynthesis; L-glutamate 5-semialdehyde from L-glutamate: step 2/2. Functionally, catalyzes the NADPH-dependent reduction of L-glutamate 5-phosphate into L-glutamate 5-semialdehyde and phosphate. The product spontaneously undergoes cyclization to form 1-pyrroline-5-carboxylate. The polypeptide is Gamma-glutamyl phosphate reductase (Neisseria meningitidis serogroup B (strain ATCC BAA-335 / MC58)).